The chain runs to 178 residues: Negative modulator of initiation of replication (178 aa).

The interval 113–117 (RTRVY) is interaction with DNA.

It belongs to the SeqA family. Homodimer. Polymerizes to form helical filaments.

The protein resides in the cytoplasm. Negative regulator of replication initiation, which contributes to regulation of DNA replication and ensures that replication initiation occurs exactly once per chromosome per cell cycle. Binds to pairs of hemimethylated GATC sequences in the oriC region, thus preventing assembly of replication proteins and re-initiation at newly replicated origins. Repression is relieved when the region becomes fully methylated. This is Negative modulator of initiation of replication from Photobacterium profundum (strain SS9).